We begin with the raw amino-acid sequence, 132 residues long: Small ribosomal subunit protein eS12 (132 aa).

Alanine 2 is subject to N-acetylalanine. Lysine 129 carries the post-translational modification N6-succinyllysine.

This sequence belongs to the eukaryotic ribosomal protein eS12 family. In terms of assembly, part of the small subunit (SSU) processome, composed of more than 70 proteins and the RNA chaperone small nucleolar RNA (snoRNA) U3. Subunit of the 40S ribosomal complex.

It localises to the nucleus. It is found in the nucleolus. Functionally, part of the small subunit (SSU) processome, first precursor of the small eukaryotic ribosomal subunit. During the assembly of the SSU processome in the nucleolus, many ribosome biogenesis factors, an RNA chaperone and ribosomal proteins associate with the nascent pre-rRNA and work in concert to generate RNA folding, modifications, rearrangements and cleavage as well as targeted degradation of pre-ribosomal RNA by the RNA exosome. Subunit of the 40S ribosomal complex. In Mus musculus (Mouse), this protein is Small ribosomal subunit protein eS12 (Rps12).